We begin with the raw amino-acid sequence, 158 residues long: NAD(P)H-quinone oxidoreductase subunit N (158 aa).

This sequence belongs to the complex I NdhN subunit family. As to quaternary structure, NDH-1 can be composed of about 15 different subunits; different subcomplexes with different compositions have been identified which probably have different functions.

It is found in the cellular thylakoid membrane. The enzyme catalyses a plastoquinone + NADH + (n+1) H(+)(in) = a plastoquinol + NAD(+) + n H(+)(out). The catalysed reaction is a plastoquinone + NADPH + (n+1) H(+)(in) = a plastoquinol + NADP(+) + n H(+)(out). Functionally, NDH-1 shuttles electrons from an unknown electron donor, via FMN and iron-sulfur (Fe-S) centers, to quinones in the respiratory and/or the photosynthetic chain. The immediate electron acceptor for the enzyme in this species is believed to be plastoquinone. Couples the redox reaction to proton translocation, and thus conserves the redox energy in a proton gradient. Cyanobacterial NDH-1 also plays a role in inorganic carbon-concentration. This is NAD(P)H-quinone oxidoreductase subunit N from Rippkaea orientalis (strain PCC 8801 / RF-1) (Cyanothece sp. (strain PCC 8801)).